The chain runs to 288 residues: Large ribosomal subunit protein uL2 (288 aa).

The tract at residues 232 to 265 is disordered; it reads GTAMNPVDHPHGGGEGKTKGKHPESPWGWKTKGY. Over residues 239-255 the composition is skewed to basic and acidic residues; sequence DHPHGGGEGKTKGKHPE.

Belongs to the universal ribosomal protein uL2 family. In terms of assembly, part of the 50S ribosomal subunit. Forms a bridge to the 30S subunit in the 70S ribosome.

One of the primary rRNA binding proteins. Required for association of the 30S and 50S subunits to form the 70S ribosome, for tRNA binding and peptide bond formation. It has been suggested to have peptidyltransferase activity; this is somewhat controversial. Makes several contacts with the 16S rRNA in the 70S ribosome. This Hydrogenobaculum sp. (strain Y04AAS1) protein is Large ribosomal subunit protein uL2.